Here is a 455-residue protein sequence, read N- to C-terminus: Probable glycine dehydrogenase (decarboxylating) subunit 1 (455 aa).

This sequence belongs to the GcvP family. N-terminal subunit subfamily. As to quaternary structure, the glycine cleavage system is composed of four proteins: P, T, L and H. In this organism, the P 'protein' is a heterodimer of two subunits.

It catalyses the reaction N(6)-[(R)-lipoyl]-L-lysyl-[glycine-cleavage complex H protein] + glycine + H(+) = N(6)-[(R)-S(8)-aminomethyldihydrolipoyl]-L-lysyl-[glycine-cleavage complex H protein] + CO2. The glycine cleavage system catalyzes the degradation of glycine. The P protein binds the alpha-amino group of glycine through its pyridoxal phosphate cofactor; CO(2) is released and the remaining methylamine moiety is then transferred to the lipoamide cofactor of the H protein. The sequence is that of Probable glycine dehydrogenase (decarboxylating) subunit 1 from Francisella tularensis subsp. holarctica (strain FTNF002-00 / FTA).